An 89-amino-acid polypeptide reads, in one-letter code: Small ribosomal subunit protein uS15 (89 aa).

It belongs to the universal ribosomal protein uS15 family. Part of the 30S ribosomal subunit. Forms a bridge to the 50S subunit in the 70S ribosome, contacting the 23S rRNA.

Functionally, one of the primary rRNA binding proteins, it binds directly to 16S rRNA where it helps nucleate assembly of the platform of the 30S subunit by binding and bridging several RNA helices of the 16S rRNA. Forms an intersubunit bridge (bridge B4) with the 23S rRNA of the 50S subunit in the ribosome. This chain is Small ribosomal subunit protein uS15, found in Protochlamydia amoebophila (strain UWE25).